Here is an 872-residue protein sequence, read N- to C-terminus: MQEQYSPRAVEAAAQQKWQKTAAFKAVEDASRPKYYALSMFPYPSGKLHMGHVRNYTITDVLARFKRLQGFNVLQPMGWDAFGLPAENAAMKNGGAPAAWTYANIEYMKTQLDSLGFALDWERELATCKPDYYRWEQWLFTRLFEKGVIYKKNGVVNWDPVDQTVLANEQVVDGRGWRSGALVEKREIPMYYFRITDYAEQLLADLDKLDGWPEQVKTMQRNWIGKSYGSDVVFPYDEASIGHAGELKVYTTRPDTLMGATYVAVAAEHPLATQAAAGNAALQAFIAECKSGSVAEADVAKMEKKGMDTGLSVIHPLTGERLPVWVANYVLWGYGEGAVMAVPAHDERDFEFANKYQLPIKQVIALASGDGEYDAANWQEWYGAKDDTVKTVNSGKYDGLGYQAAFDAIIGDLQAKSLGQKKTQYRLRDWGISRQRYWGCPIPIIHCPSCGDVPVPEKDLPVTLPENVIPDGAGSPLAKMPEFYETSCPKCGGAAKRETDTMDTFVESSWYYARYASPKCDTAMVDKQAADYWLQVDQYVGGIEHAILHLLYARFFHKLMRDEGLVSSDEPFKSLLTQGMVVCETFYRDLPNGTKDWIAPQDVILERDAKGKIVAAKHRVDGQPVVVGGIEKMSKSKNNGVDPQEFIEKYGADTARLFMMFAAPPEQSLEWSDAGVEGAFRFLKRLWKTAREHVEAGVVAPYASGELNASQKELRFKLHGTIQKVADDYGRRQQFNTAIAAVMELLNAYDKADTSGDIGRAVAQEVLEAATLLLSPIVPHVCDGIWNALKPGTELLAQAWPKVDEAALVKSEIELMVQVCGKLRGSVTVAADAAKDAIEAAALAHENVIKFMEGKPAKKIIVVPGRLVNIVV.

The 'HIGH' region signature appears at 42–52; sequence PYPSGKLHMGH. A 'KMSKS' region motif is present at residues 632-636; sequence KMSKS. K635 serves as a coordination point for ATP.

This sequence belongs to the class-I aminoacyl-tRNA synthetase family.

It is found in the cytoplasm. The enzyme catalyses tRNA(Leu) + L-leucine + ATP = L-leucyl-tRNA(Leu) + AMP + diphosphate. The chain is Leucine--tRNA ligase from Chromobacterium violaceum (strain ATCC 12472 / DSM 30191 / JCM 1249 / CCUG 213 / NBRC 12614 / NCIMB 9131 / NCTC 9757 / MK).